The chain runs to 402 residues: tRNA pseudouridine synthase Pus10 (402 aa).

The THUMP domain occupies 37–159; it reads RLRGERLVEK…QIRVHVQINP (123 aa). Catalysis depends on D228, which acts as the Nucleophile. Positions 296 and 364 each coordinate substrate.

Belongs to the pseudouridine synthase Pus10 family.

It catalyses the reaction uridine(54) in tRNA = pseudouridine(54) in tRNA. The catalysed reaction is uridine(55) in tRNA = pseudouridine(55) in tRNA. Its function is as follows. Responsible for synthesis of pseudouridine from uracil-54 and uracil-55 in the psi GC loop of transfer RNAs. The chain is tRNA pseudouridine synthase Pus10 from Methanothermobacter marburgensis (strain ATCC BAA-927 / DSM 2133 / JCM 14651 / NBRC 100331 / OCM 82 / Marburg) (Methanobacterium thermoautotrophicum).